Reading from the N-terminus, the 447-residue chain is Argininosuccinate synthase (447 aa).

ATP is bound by residues 17-25 and Ala43; that span reads AFSGGLDTS. Tyr99 is an L-citrulline binding site. Positions 129 and 131 each coordinate ATP. Residues Thr131, Asn135, and Asp136 each coordinate L-aspartate. L-citrulline is bound at residue Asn135. Asp136 provides a ligand contact to ATP. Positions 139 and 192 each coordinate L-citrulline. Asp194 is an ATP binding site. The L-citrulline site is built by Thr201, Glu203, and Glu280.

This sequence belongs to the argininosuccinate synthase family. Type 2 subfamily. Homotetramer.

It localises to the cytoplasm. It catalyses the reaction L-citrulline + L-aspartate + ATP = 2-(N(omega)-L-arginino)succinate + AMP + diphosphate + H(+). The protein operates within amino-acid biosynthesis; L-arginine biosynthesis; L-arginine from L-ornithine and carbamoyl phosphate: step 2/3. This is Argininosuccinate synthase from Klebsiella pneumoniae (strain 342).